A 423-amino-acid polypeptide reads, in one-letter code: UPF0229 protein Psyr_4632 (423 aa).

The segment at 65 to 110 is disordered; that stretch reads HHGRGGKQTVVHPGNKEFTTGEHIARPQGGGGGKGPGKAGNSGEGM. A compositionally biased stretch (gly residues) spans 92–107; it reads QGGGGGKGPGKAGNSG.

The protein belongs to the UPF0229 family.

The chain is UPF0229 protein Psyr_4632 from Pseudomonas syringae pv. syringae (strain B728a).